We begin with the raw amino-acid sequence, 842 residues long: Translation initiation factor IF-2 (842 aa).

2 disordered regions span residues 42-91 and 139-253; these read ETKR…NLSS and LQKQ…NQEP. Composition is skewed to basic and acidic residues over residues 176–190 and 199–214; these read IEKRKIDENQEEERH and SEIRAPKIVKGADERR. The region spanning 340 to 509 is the tr-type G domain; sequence PRPPVVTIMG…LLQAEMLDLK (170 aa). Residues 349–356 form a G1 region; it reads GHVDHGKT. Residue 349–356 participates in GTP binding; it reads GHVDHGKT. The interval 374–378 is G2; sequence GITQH. The interval 395-398 is G3; it reads DTPG. GTP contacts are provided by residues 395 to 399 and 449 to 452; these read DTPGH and NKID. Positions 449–452 are G4; the sequence is NKID. The G5 stretch occupies residues 485–487; sequence SAK.

It belongs to the TRAFAC class translation factor GTPase superfamily. Classic translation factor GTPase family. IF-2 subfamily.

Its subcellular location is the cytoplasm. One of the essential components for the initiation of protein synthesis. Protects formylmethionyl-tRNA from spontaneous hydrolysis and promotes its binding to the 30S ribosomal subunits. Also involved in the hydrolysis of GTP during the formation of the 70S ribosomal complex. The protein is Translation initiation factor IF-2 of Bartonella tribocorum (strain CIP 105476 / IBS 506).